Reading from the N-terminus, the 158-residue chain is Putative zinc-binding protein ORF9 (158 aa).

The RING-type; degenerate zinc-finger motif lies at 72 to 111; that stretch reads CPVCGRAVVGPTVREACGHVTCNACETEACAVDRLCIGGG. A disordered region spans residues 126 to 158; it reads GPRWRGPRPTRPEAHEAVQRSRGSSEDACTCAP. Residues 135-150 show a composition bias toward basic and acidic residues; sequence TRPEAHEAVQRSRGSS.

This chain is Putative zinc-binding protein ORF9 (ORF9), found in Ictalurid herpesvirus 1 (strain Auburn) (IcHV-1).